The sequence spans 415 residues: Hepatocyte nuclear factor 3-beta (415 aa).

The fork-head DNA-binding region spans 150–244; sequence KPPYSYISLI…ENGCYLRRQK (95 aa). Over residues 251–262 the composition is skewed to basic and acidic residues; that stretch reads KMSMKEPGRKGG. A disordered region spans residues 251–324; sequence KMSMKEPGRK…GQHLMSQHHS (74 aa). A compositionally biased stretch (low complexity) spans 266–277; that stretch reads SANSSSDSCNGN. Over residues 310 to 323 the composition is skewed to polar residues; the sequence is SPVSQGQHLMSQHH.

Its subcellular location is the nucleus. Its function is as follows. Transcription activator for a number of liver genes. Interacts with the cis-acting regulatory regions of these genes. The chain is Hepatocyte nuclear factor 3-beta (foxa2) from Oryzias latipes (Japanese rice fish).